Reading from the N-terminus, the 332-residue chain is Aspartate carbamoyltransferase catalytic subunit (332 aa).

Positions 78 and 79 each coordinate carbamoyl phosphate. Lysine 106 is a binding site for L-aspartate. Positions 128, 156, and 159 each coordinate carbamoyl phosphate. L-aspartate is bound by residues arginine 189 and arginine 243. Carbamoyl phosphate is bound by residues glycine 284 and proline 285.

This sequence belongs to the aspartate/ornithine carbamoyltransferase superfamily. ATCase family. As to quaternary structure, heterododecamer (2C3:3R2) of six catalytic PyrB chains organized as two trimers (C3), and six regulatory PyrI chains organized as three dimers (R2).

It carries out the reaction carbamoyl phosphate + L-aspartate = N-carbamoyl-L-aspartate + phosphate + H(+). Its pathway is pyrimidine metabolism; UMP biosynthesis via de novo pathway; (S)-dihydroorotate from bicarbonate: step 2/3. In terms of biological role, catalyzes the condensation of carbamoyl phosphate and aspartate to form carbamoyl aspartate and inorganic phosphate, the committed step in the de novo pyrimidine nucleotide biosynthesis pathway. The polypeptide is Aspartate carbamoyltransferase catalytic subunit (Caulobacter vibrioides (strain ATCC 19089 / CIP 103742 / CB 15) (Caulobacter crescentus)).